Consider the following 312-residue polypeptide: Magnesium protoporphyrin IX methyltransferase, chloroplastic (312 aa).

Residues 1–39 (MPFAPSLLSSSSSVSQFLPRFPNATRFNVTPRSRAATVV) constitute a chloroplast transit peptide.

Belongs to the class I-like SAM-binding methyltransferase superfamily. Magnesium protoporphyrin O-methyltransferase family.

Its subcellular location is the plastid. The protein localises to the chloroplast membrane. It is found in the chloroplast thylakoid membrane. It catalyses the reaction Mg-protoporphyrin IX + S-adenosyl-L-methionine = Mg-protoporphyrin IX 13-monomethyl ester + S-adenosyl-L-homocysteine. Its pathway is porphyrin-containing compound metabolism; chlorophyll biosynthesis. Regulated by the folate status via an increased concentration of S-adenosyl-homocysteine (AdoHcy), a potent inhibitor of most AdoMet-dependent methyltransferases. Functionally, converts Mg-protoporphyrin IX to Mg-protoporphyrin IX methylester using S-adenosyl-L-methionine as a cofactor. Involved in chloroplast-to-nucleus signaling by acting as a negative effector of nuclear photosynthetic gene expression. The protein is Magnesium protoporphyrin IX methyltransferase, chloroplastic (CHLM) of Arabidopsis thaliana (Mouse-ear cress).